The primary structure comprises 261 residues: Acetylglutamate kinase (261 aa).

Substrate contacts are provided by residues 41-42 (GG), Arg-63, and Asn-157.

This sequence belongs to the acetylglutamate kinase family. ArgB subfamily.

It localises to the cytoplasm. The catalysed reaction is N-acetyl-L-glutamate + ATP = N-acetyl-L-glutamyl 5-phosphate + ADP. It participates in amino-acid biosynthesis; L-arginine biosynthesis; N(2)-acetyl-L-ornithine from L-glutamate: step 2/4. Its function is as follows. Catalyzes the ATP-dependent phosphorylation of N-acetyl-L-glutamate. This chain is Acetylglutamate kinase, found in Koribacter versatilis (strain Ellin345).